A 117-amino-acid polypeptide reads, in one-letter code: Large ribosomal subunit protein bL20 (117 aa).

Belongs to the bacterial ribosomal protein bL20 family.

Functionally, binds directly to 23S ribosomal RNA and is necessary for the in vitro assembly process of the 50S ribosomal subunit. It is not involved in the protein synthesizing functions of that subunit. The chain is Large ribosomal subunit protein bL20 from Wigglesworthia glossinidia brevipalpis.